Here is a 623-residue protein sequence, read N- to C-terminus: Arginine--tRNA ligase (623 aa).

Residues 116-126 (ANPIHPLHVGH) carry the 'HIGH' region motif.

It belongs to the class-I aminoacyl-tRNA synthetase family.

The protein resides in the cytoplasm. It carries out the reaction tRNA(Arg) + L-arginine + ATP = L-arginyl-tRNA(Arg) + AMP + diphosphate. This chain is Arginine--tRNA ligase, found in Sulfurisphaera tokodaii (strain DSM 16993 / JCM 10545 / NBRC 100140 / 7) (Sulfolobus tokodaii).